A 314-amino-acid polypeptide reads, in one-letter code: 4-hydroxy-3-methylbut-2-enyl diphosphate reductase (314 aa).

Residue Cys-12 coordinates [4Fe-4S] cluster. Residues His-41 and His-74 each contribute to the (2E)-4-hydroxy-3-methylbut-2-enyl diphosphate site. Dimethylallyl diphosphate contacts are provided by His-41 and His-74. Isopentenyl diphosphate is bound by residues His-41 and His-74. Position 96 (Cys-96) interacts with [4Fe-4S] cluster. Residue His-124 coordinates (2E)-4-hydroxy-3-methylbut-2-enyl diphosphate. His-124 is a dimethylallyl diphosphate binding site. His-124 is an isopentenyl diphosphate binding site. Glu-126 (proton donor) is an active-site residue. Thr-168 is a binding site for (2E)-4-hydroxy-3-methylbut-2-enyl diphosphate. Cys-198 is a [4Fe-4S] cluster binding site. Positions 226, 227, 228, and 270 each coordinate (2E)-4-hydroxy-3-methylbut-2-enyl diphosphate. Residues Ser-226, Ser-227, Asn-228, and Ser-270 each contribute to the dimethylallyl diphosphate site. Isopentenyl diphosphate contacts are provided by Ser-226, Ser-227, Asn-228, and Ser-270.

It belongs to the IspH family. [4Fe-4S] cluster serves as cofactor.

The enzyme catalyses isopentenyl diphosphate + 2 oxidized [2Fe-2S]-[ferredoxin] + H2O = (2E)-4-hydroxy-3-methylbut-2-enyl diphosphate + 2 reduced [2Fe-2S]-[ferredoxin] + 2 H(+). It catalyses the reaction dimethylallyl diphosphate + 2 oxidized [2Fe-2S]-[ferredoxin] + H2O = (2E)-4-hydroxy-3-methylbut-2-enyl diphosphate + 2 reduced [2Fe-2S]-[ferredoxin] + 2 H(+). The protein operates within isoprenoid biosynthesis; dimethylallyl diphosphate biosynthesis; dimethylallyl diphosphate from (2E)-4-hydroxy-3-methylbutenyl diphosphate: step 1/1. It functions in the pathway isoprenoid biosynthesis; isopentenyl diphosphate biosynthesis via DXP pathway; isopentenyl diphosphate from 1-deoxy-D-xylulose 5-phosphate: step 6/6. In terms of biological role, catalyzes the conversion of 1-hydroxy-2-methyl-2-(E)-butenyl 4-diphosphate (HMBPP) into a mixture of isopentenyl diphosphate (IPP) and dimethylallyl diphosphate (DMAPP). Acts in the terminal step of the DOXP/MEP pathway for isoprenoid precursor biosynthesis. This chain is 4-hydroxy-3-methylbut-2-enyl diphosphate reductase, found in Pseudomonas aeruginosa (strain ATCC 15692 / DSM 22644 / CIP 104116 / JCM 14847 / LMG 12228 / 1C / PRS 101 / PAO1).